The sequence spans 293 residues: tRNA pseudouridine synthase A (293 aa).

Residue D67 is the Nucleophile of the active site. Y125 is a substrate binding site.

It belongs to the tRNA pseudouridine synthase TruA family. Homodimer.

The enzyme catalyses uridine(38/39/40) in tRNA = pseudouridine(38/39/40) in tRNA. Its function is as follows. Formation of pseudouridine at positions 38, 39 and 40 in the anticodon stem and loop of transfer RNAs. The chain is tRNA pseudouridine synthase A from Synechococcus sp. (strain CC9605).